Reading from the N-terminus, the 248-residue chain is UPF0246 protein RPR_00055 (248 aa).

Belongs to the UPF0246 family.

The sequence is that of UPF0246 protein RPR_00055 from Rickettsia peacockii (strain Rustic).